Consider the following 123-residue polypeptide: UPF0738 protein BCE33L1094 (123 aa).

This sequence belongs to the UPF0738 family.

This chain is UPF0738 protein BCE33L1094, found in Bacillus cereus (strain ZK / E33L).